Consider the following 124-residue polypeptide: Phosphoribosyl-ATP pyrophosphatase (124 aa).

The protein belongs to the PRA-PH family.

Its subcellular location is the cytoplasm. It carries out the reaction 1-(5-phospho-beta-D-ribosyl)-ATP + H2O = 1-(5-phospho-beta-D-ribosyl)-5'-AMP + diphosphate + H(+). It participates in amino-acid biosynthesis; L-histidine biosynthesis; L-histidine from 5-phospho-alpha-D-ribose 1-diphosphate: step 2/9. The polypeptide is Phosphoribosyl-ATP pyrophosphatase (hisE) (Ralstonia nicotianae (strain ATCC BAA-1114 / GMI1000) (Ralstonia solanacearum)).